We begin with the raw amino-acid sequence, 113 residues long: uncharacterized protein (113 aa).

The first 20 residues, 1 to 20 (MMKKSILAFLLLTSSAAALA), serve as a signal peptide directing secretion.

This is an uncharacterized protein from Escherichia coli (strain K12).